Reading from the N-terminus, the 473-residue chain is Dihydrolipoyl dehydrogenase (473 aa).

FAD-binding positions include 36–45 (ERYDKLGGVC), Lys54, and Ala117. A disulfide bond links Cys45 and Cys50. NAD(+)-binding positions include 182–186 (GSGII), Asp205, and 270–273 (AIGR). FAD is bound by residues Asp313 and Ala321. Residue His445 is the Proton acceptor of the active site.

It belongs to the class-I pyridine nucleotide-disulfide oxidoreductase family. In terms of assembly, homodimer. It depends on FAD as a cofactor.

The protein localises to the cytoplasm. It catalyses the reaction N(6)-[(R)-dihydrolipoyl]-L-lysyl-[protein] + NAD(+) = N(6)-[(R)-lipoyl]-L-lysyl-[protein] + NADH + H(+). In terms of biological role, lipoamide dehydrogenase is a component of the alpha-ketoacid dehydrogenase complexes. The sequence is that of Dihydrolipoyl dehydrogenase (lpdA) from Buchnera aphidicola subsp. Acyrthosiphon pisum (strain APS) (Acyrthosiphon pisum symbiotic bacterium).